The primary structure comprises 551 residues: Dihydroxy-acid dehydratase (551 aa).

Aspartate 78 lines the Mg(2+) pocket. Cysteine 119 is a [2Fe-2S] cluster binding site. Mg(2+) contacts are provided by aspartate 120 and lysine 121. N6-carboxylysine is present on lysine 121. Cysteine 191 serves as a coordination point for [2Fe-2S] cluster. Glutamate 442 lines the Mg(2+) pocket. The active-site Proton acceptor is serine 468.

The protein belongs to the IlvD/Edd family. As to quaternary structure, homodimer. Requires [2Fe-2S] cluster as cofactor. Mg(2+) serves as cofactor.

The catalysed reaction is (2R)-2,3-dihydroxy-3-methylbutanoate = 3-methyl-2-oxobutanoate + H2O. It carries out the reaction (2R,3R)-2,3-dihydroxy-3-methylpentanoate = (S)-3-methyl-2-oxopentanoate + H2O. Its pathway is amino-acid biosynthesis; L-isoleucine biosynthesis; L-isoleucine from 2-oxobutanoate: step 3/4. It functions in the pathway amino-acid biosynthesis; L-valine biosynthesis; L-valine from pyruvate: step 3/4. Functionally, functions in the biosynthesis of branched-chain amino acids. Catalyzes the dehydration of (2R,3R)-2,3-dihydroxy-3-methylpentanoate (2,3-dihydroxy-3-methylvalerate) into 2-oxo-3-methylpentanoate (2-oxo-3-methylvalerate) and of (2R)-2,3-dihydroxy-3-methylbutanoate (2,3-dihydroxyisovalerate) into 2-oxo-3-methylbutanoate (2-oxoisovalerate), the penultimate precursor to L-isoleucine and L-valine, respectively. The polypeptide is Dihydroxy-acid dehydratase (Halothermothrix orenii (strain H 168 / OCM 544 / DSM 9562)).